The sequence spans 89 residues: Small ribosomal subunit protein uS15 (89 aa).

This sequence belongs to the universal ribosomal protein uS15 family. In terms of assembly, part of the 30S ribosomal subunit. Forms a bridge to the 50S subunit in the 70S ribosome, contacting the 23S rRNA.

In terms of biological role, one of the primary rRNA binding proteins, it binds directly to 16S rRNA where it helps nucleate assembly of the platform of the 30S subunit by binding and bridging several RNA helices of the 16S rRNA. Functionally, forms an intersubunit bridge (bridge B4) with the 23S rRNA of the 50S subunit in the ribosome. This chain is Small ribosomal subunit protein uS15, found in Mycobacterium bovis (strain ATCC BAA-935 / AF2122/97).